The following is a 479-amino-acid chain: Ribosomal RNA small subunit methyltransferase F (479 aa).

Residues 125-131 (AAAPGSK), Glu149, Asp176, and Asp194 each bind S-adenosyl-L-methionine. The Nucleophile role is filled by Cys247.

It belongs to the class I-like SAM-binding methyltransferase superfamily. RsmB/NOP family.

Its subcellular location is the cytoplasm. The catalysed reaction is cytidine(1407) in 16S rRNA + S-adenosyl-L-methionine = 5-methylcytidine(1407) in 16S rRNA + S-adenosyl-L-homocysteine + H(+). Its function is as follows. Specifically methylates the cytosine at position 1407 (m5C1407) of 16S rRNA. The polypeptide is Ribosomal RNA small subunit methyltransferase F (Citrobacter koseri (strain ATCC BAA-895 / CDC 4225-83 / SGSC4696)).